The primary structure comprises 90 residues: Small ribosomal subunit protein bS16 (90 aa).

This sequence belongs to the bacterial ribosomal protein bS16 family.

This is Small ribosomal subunit protein bS16 from Lactobacillus helveticus (strain DPC 4571).